Reading from the N-terminus, the 170-residue chain is Peptide deformylase (170 aa).

Residues C91 and H133 each contribute to the Fe cation site. E134 is a catalytic residue. H137 is a binding site for Fe cation.

The protein belongs to the polypeptide deformylase family. Requires Fe(2+) as cofactor.

It carries out the reaction N-terminal N-formyl-L-methionyl-[peptide] + H2O = N-terminal L-methionyl-[peptide] + formate. Its function is as follows. Removes the formyl group from the N-terminal Met of newly synthesized proteins. Requires at least a dipeptide for an efficient rate of reaction. N-terminal L-methionine is a prerequisite for activity but the enzyme has broad specificity at other positions. This chain is Peptide deformylase, found in Pasteurella multocida (strain Pm70).